A 611-amino-acid chain; its full sequence is Phosphomethylpyrimidine synthase (611 aa).

Substrate is bound by residues N218, M247, Y276, H312, 332-334 (SRG), 373-376 (DGLR), and E412. Position 416 (H416) interacts with Zn(2+). Y439 contacts substrate. H480 contacts Zn(2+). [4Fe-4S] cluster-binding residues include C560, C563, and C568.

Belongs to the ThiC family. Homodimer. It depends on [4Fe-4S] cluster as a cofactor.

It catalyses the reaction 5-amino-1-(5-phospho-beta-D-ribosyl)imidazole + S-adenosyl-L-methionine = 4-amino-2-methyl-5-(phosphooxymethyl)pyrimidine + CO + 5'-deoxyadenosine + formate + L-methionine + 3 H(+). It functions in the pathway cofactor biosynthesis; thiamine diphosphate biosynthesis. Catalyzes the synthesis of the hydroxymethylpyrimidine phosphate (HMP-P) moiety of thiamine from aminoimidazole ribotide (AIR) in a radical S-adenosyl-L-methionine (SAM)-dependent reaction. The sequence is that of Phosphomethylpyrimidine synthase from Caulobacter sp. (strain K31).